A 184-amino-acid chain; its full sequence is Cytochrome c homolog (184 aa).

Topologically, residues 1–10 are cytoplasmic; sequence MDSFELNKIL. A helical; Signal-anchor transmembrane segment spans residues 11 to 31; that stretch reads GAVLGTCLILLVTSFTANALF. The Periplasmic segment spans residues 32–184; that stretch reads SPKMPEKPGF…HPKPLPTASK (153 aa). Residues Cys-84, Cys-87, His-88, and Met-151 each contribute to the heme c site.

The protein belongs to the cytochrome c family. Post-translationally, binds 1 heme c group covalently per subunit.

It is found in the cell membrane. Its function is as follows. May be involved in electron transfer from bc1 complex to aa3. The polypeptide is Cytochrome c homolog (cycM) (Bradyrhizobium diazoefficiens (strain JCM 10833 / BCRC 13528 / IAM 13628 / NBRC 14792 / USDA 110)).